A 218-amino-acid polypeptide reads, in one-letter code: Thiopurine S-methyltransferase (218 aa).

S-adenosyl-L-methionine-binding residues include tryptophan 10, leucine 45, glutamate 66, and arginine 123.

Belongs to the class I-like SAM-binding methyltransferase superfamily. TPMT family.

The protein resides in the cytoplasm. The enzyme catalyses S-adenosyl-L-methionine + a thiopurine = S-adenosyl-L-homocysteine + a thiopurine S-methylether.. The sequence is that of Thiopurine S-methyltransferase from Xanthomonas euvesicatoria pv. vesicatoria (strain 85-10) (Xanthomonas campestris pv. vesicatoria).